We begin with the raw amino-acid sequence, 208 residues long: Protein-L-isoaspartate O-methyltransferase (208 aa).

Ser59 is an active-site residue.

The protein belongs to the methyltransferase superfamily. L-isoaspartyl/D-aspartyl protein methyltransferase family.

It is found in the cytoplasm. The catalysed reaction is [protein]-L-isoaspartate + S-adenosyl-L-methionine = [protein]-L-isoaspartate alpha-methyl ester + S-adenosyl-L-homocysteine. Catalyzes the methyl esterification of L-isoaspartyl residues in peptides and proteins that result from spontaneous decomposition of normal L-aspartyl and L-asparaginyl residues. It plays a role in the repair and/or degradation of damaged proteins. This is Protein-L-isoaspartate O-methyltransferase from Pectobacterium atrosepticum (strain SCRI 1043 / ATCC BAA-672) (Erwinia carotovora subsp. atroseptica).